The sequence spans 189 residues: Segregation and condensation protein B (189 aa).

This sequence belongs to the ScpB family. In terms of assembly, homodimer. Homodimerization may be required to stabilize the binding of ScpA to the Smc head domains. Component of a cohesin-like complex composed of ScpA, ScpB and the Smc homodimer, in which ScpA and ScpB bind to the head domain of Smc. The presence of the three proteins is required for the association of the complex with DNA.

It is found in the cytoplasm. In terms of biological role, participates in chromosomal partition during cell division. May act via the formation of a condensin-like complex containing Smc and ScpA that pull DNA away from mid-cell into both cell halves. In Streptococcus pneumoniae serotype 19F (strain G54), this protein is Segregation and condensation protein B.